Reading from the N-terminus, the 356-residue chain is MQTLHALLRDIPAPDAEAMARAQQHIDGLLKPPGSLGRLETLAVQLAGMPGLNGTPQVGEKAVLVMCADHGVWDEGVAVSPKIVTAIQAANMTQGTTGVCVLAAQAGAKVHVIDVGIDAEPIPGVVDMRVARGCGNIAVGPAMSRSQAEALLLEVSRYTCDLAKRGVTLFGVGELGMANTTPAAAMVSVFTGSDAKEVVGIGANLPPSRIDNKVDVVRRAIAINQPNPRDGIDVLSKVGGVDLVGMTGVMLGAARCGLPVLLDGFLSYSAALAACQIAPAVRPYLIPSHFSAEKGARIALAHLSMEPYLHMAMRLGEGSGAALAMPIVEAACAMFHNMGELAASNIVLPEGNANAT.

Glutamate 317 (proton acceptor) is an active-site residue.

Belongs to the CobT family. In terms of assembly, homodimer.

It carries out the reaction 5,6-dimethylbenzimidazole + nicotinate beta-D-ribonucleotide = alpha-ribazole 5'-phosphate + nicotinate + H(+). The protein operates within nucleoside biosynthesis; alpha-ribazole biosynthesis; alpha-ribazole from 5,6-dimethylbenzimidazole: step 1/2. Its function is as follows. Catalyzes the synthesis of alpha-ribazole-5'-phosphate from nicotinate mononucleotide (NAMN) and 5,6-dimethylbenzimidazole (DMB). The sequence is that of Nicotinate-nucleotide--dimethylbenzimidazole phosphoribosyltransferase from Salmonella paratyphi A (strain ATCC 9150 / SARB42).